The following is a 97-amino-acid chain: Co-chaperonin GroES (97 aa).

It belongs to the GroES chaperonin family. As to quaternary structure, heptamer of 7 subunits arranged in a ring. Interacts with the chaperonin GroEL.

It localises to the cytoplasm. Functionally, together with the chaperonin GroEL, plays an essential role in assisting protein folding. The GroEL-GroES system forms a nano-cage that allows encapsulation of the non-native substrate proteins and provides a physical environment optimized to promote and accelerate protein folding. GroES binds to the apical surface of the GroEL ring, thereby capping the opening of the GroEL channel. The protein is Co-chaperonin GroES of Pseudomonas savastanoi pv. phaseolicola (strain 1448A / Race 6) (Pseudomonas syringae pv. phaseolicola (strain 1448A / Race 6)).